A 565-amino-acid chain; its full sequence is Proline--tRNA ligase (565 aa).

Belongs to the class-II aminoacyl-tRNA synthetase family. ProS type 1 subfamily. Homodimer.

It localises to the cytoplasm. The catalysed reaction is tRNA(Pro) + L-proline + ATP = L-prolyl-tRNA(Pro) + AMP + diphosphate. Functionally, catalyzes the attachment of proline to tRNA(Pro) in a two-step reaction: proline is first activated by ATP to form Pro-AMP and then transferred to the acceptor end of tRNA(Pro). As ProRS can inadvertently accommodate and process non-cognate amino acids such as alanine and cysteine, to avoid such errors it has two additional distinct editing activities against alanine. One activity is designated as 'pretransfer' editing and involves the tRNA(Pro)-independent hydrolysis of activated Ala-AMP. The other activity is designated 'posttransfer' editing and involves deacylation of mischarged Ala-tRNA(Pro). The misacylated Cys-tRNA(Pro) is not edited by ProRS. The chain is Proline--tRNA ligase from Lactobacillus gasseri (strain ATCC 33323 / DSM 20243 / BCRC 14619 / CIP 102991 / JCM 1131 / KCTC 3163 / NCIMB 11718 / NCTC 13722 / AM63).